A 359-amino-acid polypeptide reads, in one-letter code: 4-galactosyl-N-acetylglucosaminide 3-alpha-L-fucosyltransferase FUT6 (359 aa).

Residues 1 to 14 (MDPLGPAKPQWSWR) are Cytoplasmic-facing. Residues 15–34 (CCLTTLLFQLLMAVCFFSYL) form a helical; Signal-anchor for type II membrane protein membrane-spanning segment. Topologically, residues 35 to 359 (RVSQDDPTVY…QTRGIAAWFT (325 aa)) are lumenal. N-linked (GlcNAc...) asparagine glycosylation is found at N46, N91, N153, and N184. Residues 73-112 (KPIALPRCSEMVPGTADCNITADRKVYPQADAVIVHHREV) form a determines site-specific fucosylation region.

Belongs to the glycosyltransferase 10 family. Homodimer and monomer. Monomer (secreted form). N-glycosylated. In terms of processing, proteolytic cleavage releases a secreted glycoform of 43 kDa. In terms of tissue distribution, kidney, liver, colon, small intestine, bladder, uterus and salivary gland.

It localises to the golgi apparatus. The protein resides in the golgi stack membrane. Its subcellular location is the secreted. It catalyses the reaction a beta-D-galactosyl-(1-&gt;4)-N-acetyl-beta-D-glucosaminyl derivative + GDP-beta-L-fucose = a beta-D-galactosyl-(1-&gt;4)-[alpha-L-fucosyl-(1-&gt;3)]-N-acetyl-beta-D-glucosaminyl derivative + GDP + H(+). The catalysed reaction is an N-acetyl-alpha-neuraminyl-(2-&gt;3)-beta-D-galactosyl-(1-&gt;4)-N-acetyl-beta-D-glucosaminyl derivative + GDP-beta-L-fucose = an alpha-Neu5Ac-(2-&gt;3)-beta-D-Gal-(1-&gt;4)-[alpha-L-Fuc-(1-&gt;3)]-beta-D-GlcNAc derivative + GDP + H(+). It carries out the reaction an alpha-Neu5Ac-(2-&gt;3)-beta-D-Gal-(1-&gt;4)-beta-D-GlcNAc-(1-&gt;3)-beta-D-Gal-(1-&gt;4)-[alpha-L-Fuc-(1-&gt;3)]-beta-D-GlcNAc derivative + GDP-beta-L-fucose = an alpha-Neu5Ac-(2-&gt;3)-beta-D-Gal-(1-&gt;4)-[alpha-L-Fuc-(1-&gt;3)]-beta-D-GlcNAc-(1-&gt;3)-beta-D-Gal-(1-&gt;4)-[alpha-L-Fuc-(1-&gt;3)]-beta-D-GlcNAc derivative + GDP + H(+). The enzyme catalyses a neolactoside nLc6Cer + GDP-beta-L-fucose = beta-D-Gal-(1-&gt;4)-[alpha-L-Fuc-(1-&gt;3)]-beta-D-GlcNAc-(1-&gt;3)-beta-D-Gal-(1-&gt;4)-beta-D-GlcNAc-(1-&gt;3)-beta-D-Gal-(1-&gt;4)-beta-D-Glc-(1&lt;-&gt;1')-Cer + GDP + H(+). It catalyses the reaction a neolactoside nLc6Cer + GDP-beta-L-fucose = beta-D-galactosyl-(1-&gt;4)-N-acetyl-beta-D-glucosaminyl-(1-&gt;3)-beta-D-galactosyl-(1-&gt;4)-[alpha-L-fucosyl-(1-&gt;3)]-N-acetyl-beta-D-glucosaminyl-(1-&gt;3)-beta-D-galactosyl-(1-&gt;4)-beta-D-glucosyl-(1&lt;-&gt;1')-ceramide + GDP + H(+). The catalysed reaction is a neolactoside VI(3)-alpha-NeuNAc-nLc6Cer + GDP-beta-L-fucose = a neolactoside VI(3)-alpha-NeuAc,V(3)-alphaFuc-nLc6Cer + GDP + H(+). It carries out the reaction beta-D-galactosyl-(1-&gt;4)-N-acetyl-D-glucosamine + GDP-beta-L-fucose = beta-D-galactosyl-(1-&gt;4)-[alpha-L-fucosyl-(1-&gt;3)]-N-acetyl-D-glucosamine + GDP + H(+). The enzyme catalyses N-acetyl-alpha-neuraminosyl-(2-&gt;3)-beta-D-galactosyl-(1-&gt;4)-N-acetyl-beta-D-glucosamine + GDP-beta-L-fucose = N-acetyl-alpha-neuraminosyl-(2-&gt;3)-beta-D-galactosyl-(1-&gt;4)-[alpha-L-fucosyl-(1-&gt;3)]-N-acetyl-beta-D-glucosamine + GDP + H(+). It catalyses the reaction lactose + GDP-beta-L-fucose = beta-D-galactosyl-(1-&gt;4)-[alpha-L-fucosyl-(1-&gt;3)]-D-glucose + GDP + H(+). The catalysed reaction is alpha-L-Fuc-(1-&gt;2)-beta-D-Gal-(1-&gt;4)-D-Glc + GDP-beta-L-fucose = alpha-L-Fuc-(1-&gt;2)-beta-D-Gal-(1-&gt;4)-[alpha-L-Fuc-(1-&gt;3)]-D-Glc + GDP + H(+). It carries out the reaction a beta-D-galactosyl-(1-&gt;4)-N-acetyl-beta-D-6-sulfooxy-glucosaminyl derivative + GDP-beta-L-fucose = a beta-D-galactosyl-(1-&gt;4)-[alpha-L-fucosyl-(1-&gt;3)]-N-acetyl-beta-D-6-sulfooxy-glucosaminyl derivative + GDP + H(+). Its pathway is protein modification; protein glycosylation. Its function is as follows. Catalyzes the transfer of L-fucose, from a guanosine diphosphate-beta-L-fucose, to the N-acetyl glucosamine (GlcNAc) of a distal alpha2,3 sialylated lactosamine unit of a glycoprotein- or a glycolipid-linked sialopolylactosamines chain or of a distal or internal lactosamine unit of a neutral glycoprotein- or a glycolipid-linked polylactosamines chain through an alpha-1,3 glycosidic linkage and participates in surface expression of the sialyl Lewis X (sLe(x)), Lewis X (Le(x)) and non sialylated VIM2 determinants. Moreover transfers fucose to H-type 2 (Fucalpha1-2Galbeta1-4GlcNAc) chain acceptor substrates and participates in difucosylated sialyl Lewis x determinants. Also fucosylates a polylactosamine substrate having a 6 sulfate modification at the GlcNAc moiety and gives rise to sialyl and non-sialyl 6-sulfo lewis X. Does not have activity towards type 1 ((Galbeta1-3GlcNAc)) and H-type 1 chain (Fucalpha1-2Galbeta1-3GlcNAc) acceptors substrates. Does not have alpha(1,3)-fucosyltransferase activity. This Homo sapiens (Human) protein is 4-galactosyl-N-acetylglucosaminide 3-alpha-L-fucosyltransferase FUT6.